A 415-amino-acid chain; its full sequence is Glutamyl-tRNA reductase (415 aa).

Substrate contacts are provided by residues 49 to 52 (TCNR), Ser104, 109 to 111 (EPQ), and Gln115. Residue Cys50 is the Nucleophile of the active site. NADP(+) is bound at residue 184-189 (GAGEMI).

It belongs to the glutamyl-tRNA reductase family. As to quaternary structure, homodimer.

It carries out the reaction (S)-4-amino-5-oxopentanoate + tRNA(Glu) + NADP(+) = L-glutamyl-tRNA(Glu) + NADPH + H(+). Its pathway is porphyrin-containing compound metabolism; protoporphyrin-IX biosynthesis; 5-aminolevulinate from L-glutamyl-tRNA(Glu): step 1/2. Catalyzes the NADPH-dependent reduction of glutamyl-tRNA(Glu) to glutamate 1-semialdehyde (GSA). This is Glutamyl-tRNA reductase from Neisseria meningitidis serogroup C (strain 053442).